The sequence spans 151 residues: Differentiation-associated protein 2 (151 aa).

Positions 1-22 (MKQIIRLITTLLLLSLIGITCA) are cleaved as a signal peptide.

It localises to the endoplasmic reticulum. The protein localises to the vacuole. Has an essential role in the initiation of differentiation. Also required for cAMP signaling. The chain is Differentiation-associated protein 2 (dia2) from Dictyostelium discoideum (Social amoeba).